Consider the following 4351-residue polypeptide: Protocadherin Fat 2 (4351 aa).

A signal peptide spans 1 to 18 (MTLVLLGVAMVLLHRAAC). Residues 19 to 4050 (EKPLEETITP…IKRGDWGQQE (4032 aa)) are Extracellular-facing. Cadherin domains follow at residues 34 to 148 (THSL…KPLF) and 149 to 256 (SPPS…PPVI). Residues Asn-39, Asn-210, Asn-280, and Asn-330 are each glycosylated (N-linked (GlcNAc...) asparagine). Cadherin domains lie at 363-458 (EKAV…APVF), 459-564 (NRSS…QPMF), 565-669 (EEVN…VPVQ), 716-820 (DHFP…PPRF), 821-925 (PPGG…PPQC), 926-1032 (ITEH…SPHF), 1033-1142 (SSFV…RPVF), 1138-1242 (SRPV…SPMF), 1243-1346 (SHKL…SSIP), 1350-1448 (DESH…RPQF), 1449-1555 (LQDH…SPHF), 1556-1660 (TQPR…APIF), 1661-1758 (SKDE…APAF), 1759-1872 (LKST…PPRF), 1873-1968 (SEQI…SLQF), 1969-2070 (DQDI…IPEF), 2071-2171 (QHLP…NPLF), 2172-2272 (QSPY…PPTF), 2273-2379 (SQLV…PPEF), 2380-2481 (REPQ…SPEF), 2482-2585 (QQNV…APQF), 2586-2692 (KASG…LPKF), 2693-2799 (SEPL…RPVF), 2800-2908 (EADP…PPRF), 2909-3013 (ASED…SPQC), 3014-3115 (SQLL…APRF), 3116-3220 (FPSH…LPIF), 3221-3323 (LNSE…HPRF), 3324-3428 (THDL…PPRF), 3429-3533 (FQLN…PPST), and 3534-3631 (LPLE…APQQ). 4 N-linked (GlcNAc...) asparagine glycosylation sites follow: Asn-459, Asn-568, Asn-627, and Asn-789. N-linked (GlcNAc...) asparagine glycosylation occurs at Asn-996. N-linked (GlcNAc...) asparagine glycosylation is found at Asn-1175, Asn-1276, and Asn-1417. 13 N-linked (GlcNAc...) asparagine glycosylation sites follow: Asn-1899, Asn-1998, Asn-2007, Asn-2102, Asn-2165, Asn-2183, Asn-2325, Asn-2368, Asn-2387, Asn-2430, Asn-2470, Asn-2547, and Asn-2597. N-linked (GlcNAc...) asparagine glycans are attached at residues Asn-3127, Asn-3278, and Asn-3312. Asn-3432, Asn-3603, Asn-3770, Asn-3774, Asn-3815, Asn-3842, Asn-3875, and Asn-3906 each carry an N-linked (GlcNAc...) asparagine glycan. The Laminin G-like domain occupies 3775 to 3946 (GTTWRFSGQS…YLETWALSQC (172 aa)). 4 disulfides stabilise this stretch: Cys-3914–Cys-3946, Cys-3953–Cys-3964, Cys-3958–Cys-3974, and Cys-3976–Cys-3985. EGF-like domains follow at residues 3949–3986 (PGTTCSQNPCLNGGSCSPALGSGYLCRCPPLFSGRNCE) and 3988–4024 (GRENCTSAPCQEGGTCVSSPEGTSCSCPHPYTGDRCE). Asn-3991 carries an N-linked (GlcNAc...) asparagine glycan. 3 disulfides stabilise this stretch: Cys-3992–Cys-4003, Cys-3997–Cys-4012, and Cys-4014–Cys-4023. Residues 4051–4071 (FLVIIVALPLLIIATVGLLLY) traverse the membrane as a helical segment. Residues 4072-4351 (CRRCKSHKPV…DYGSCEEVMF (280 aa)) are Cytoplasmic-facing. Residues 4313-4340 (DCEVNGGPAPGRSQPRAPPNYEGSDMVE) are disordered.

In terms of assembly, homodimer.

The protein resides in the cell membrane. It localises to the cell junction. The protein localises to the golgi apparatus. Its subcellular location is the trans-Golgi network. Involved in the regulation of cell migration. May be involved in mediating the organization of the parallel fibers of granule cells during cerebellar development. The polypeptide is Protocadherin Fat 2 (Fat2) (Mus musculus (Mouse)).